A 375-amino-acid polypeptide reads, in one-letter code: Platelet-derived growth factor receptor-like protein (375 aa).

A signal peptide spans 1–21; that stretch reads MKVWLLLGLLLVHEALEDVTG. Residues 22–64 form a disordered region; that stretch reads QHLPKNKRPKEPGENRIKPTNKKVKPKIPKIKDRDSADSTPKT. The segment covering 40–50 has biased composition (basic residues); that stretch reads PTNKKVKPKIP. The Ig-like C2-type 1 domain occupies 62 to 159; that stretch reads PKTQSIMMQV…GYICRKDETK (98 aa). A disulfide bridge connects residues Cys-96 and Cys-143. Residues Asn-132 and Asn-219 are each glycosylated (N-linked (GlcNAc...) asparagine). The region spanning 272-375 is the Ig-like C2-type 2 domain; it reads PSTTILASSN…TTVATTVEFS (104 aa). Cys-293 and Cys-357 form a disulfide bridge.

Forms a complex composed of PDGFRL, TNK2 and GRB2.

The protein resides in the secreted. This is Platelet-derived growth factor receptor-like protein (PDGFRL) from Macaca fascicularis (Crab-eating macaque).